The primary structure comprises 162 residues: Ribonuclease H (162 aa).

An RNase H type-1 domain is found at 6–154; that stretch reads DMKRVEIFTD…ADRLANQGVE (149 aa). Mg(2+) is bound by residues aspartate 15, glutamate 53, aspartate 82, and aspartate 146.

The protein belongs to the RNase H family. In terms of assembly, monomer. Requires Mg(2+) as cofactor.

It is found in the cytoplasm. It catalyses the reaction Endonucleolytic cleavage to 5'-phosphomonoester.. Functionally, endonuclease that specifically degrades the RNA of RNA-DNA hybrids. This Nitrosomonas eutropha (strain DSM 101675 / C91 / Nm57) protein is Ribonuclease H.